Consider the following 328-residue polypeptide: GMP reductase (328 aa).

Cysteine 176 acts as the Thioimidate intermediate in catalysis. 205–228 (IIADGGIRTHGDIAKSIRFGASMI) is a binding site for NADP(+).

The protein belongs to the IMPDH/GMPR family. GuaC type 2 subfamily.

It carries out the reaction IMP + NH4(+) + NADP(+) = GMP + NADPH + 2 H(+). Functionally, catalyzes the irreversible NADPH-dependent deamination of GMP to IMP. It functions in the conversion of nucleobase, nucleoside and nucleotide derivatives of G to A nucleotides, and in maintaining the intracellular balance of A and G nucleotides. This Streptococcus pneumoniae (strain JJA) protein is GMP reductase.